A 377-amino-acid polypeptide reads, in one-letter code: D-alanine--D-alanine ligase (377 aa).

The 210-residue stretch at 140-349 (KELLTVNNIR…NVELVDKLID (210 aa)) folds into the ATP-grasp domain. 170–225 (VKDLGDVVFVKAANQGSSVGVSRAKTADEFEAALTDSFQYDYKVLIEAAVKGPREL) serves as a coordination point for ATP. Mg(2+) contacts are provided by Asp303, Glu316, and Asn318.

The protein belongs to the D-alanine--D-alanine ligase family. Requires Mg(2+) as cofactor. Mn(2+) serves as cofactor.

It localises to the cytoplasm. It carries out the reaction 2 D-alanine + ATP = D-alanyl-D-alanine + ADP + phosphate + H(+). The protein operates within cell wall biogenesis; peptidoglycan biosynthesis. Functionally, cell wall formation. This Leuconostoc citreum (strain KM20) protein is D-alanine--D-alanine ligase.